Reading from the N-terminus, the 220-residue chain is N-(5'-phosphoribosyl)anthranilate isomerase (220 aa).

The protein belongs to the TrpF family.

It carries out the reaction N-(5-phospho-beta-D-ribosyl)anthranilate = 1-(2-carboxyphenylamino)-1-deoxy-D-ribulose 5-phosphate. Its pathway is amino-acid biosynthesis; L-tryptophan biosynthesis; L-tryptophan from chorismate: step 3/5. This Xylella fastidiosa (strain M23) protein is N-(5'-phosphoribosyl)anthranilate isomerase.